The sequence spans 135 residues: Ribosome-binding factor A (135 aa).

It belongs to the RbfA family. Monomer. Binds 30S ribosomal subunits, but not 50S ribosomal subunits or 70S ribosomes.

Its subcellular location is the cytoplasm. Functionally, one of several proteins that assist in the late maturation steps of the functional core of the 30S ribosomal subunit. Associates with free 30S ribosomal subunits (but not with 30S subunits that are part of 70S ribosomes or polysomes). Required for efficient processing of 16S rRNA. May interact with the 5'-terminal helix region of 16S rRNA. In Novosphingobium aromaticivorans (strain ATCC 700278 / DSM 12444 / CCUG 56034 / CIP 105152 / NBRC 16084 / F199), this protein is Ribosome-binding factor A.